An 846-amino-acid polypeptide reads, in one-letter code: ATR-interacting protein mus304 (846 aa).

3 disordered regions span residues 20-40 (DVSVTRGSARPSPPRNNFDGI), 90-109 (QGSTSTQQMFPPPPPPQKKP), and 135-162 (EPQKMPEPKTSTSRITTSSISVQQKTTT). Residues 144–162 (TSTSRITTSSISVQQKTTT) are compositionally biased toward low complexity. Coiled coils occupy residues 168–240 (ATQS…LADE) and 327–359 (EYSENEDQTKKRRNHFELELKQLLLHYARLQAK). The EEXXXDL motif signature appears at 504-510 (EELLFDL). The interval 651–681 (GAVQGSVSNGSTSASVSNPNQNSNSSTTQRG) is disordered. Residues 655–676 (GSVSNGSTSASVSNPNQNSNSS) are compositionally biased toward low complexity.

It belongs to the ATRIP family. As to quaternary structure, interacts with ATR/mei-41. As to expression, highly expressed in the oocyte and nurse cells from stage 5 onward and in embryos prior to during nuclear division 14. Then, it decreases to background levels during interphase 14. Weakly or not expressed in stage embryos and imaginal disks.

The protein resides in the cytoplasm. Functionally, DNA damage checkpoint protein required for chromosome break repair and for genomic stability during development. The chain is ATR-interacting protein mus304 (mus304) from Drosophila melanogaster (Fruit fly).